A 453-amino-acid polypeptide reads, in one-letter code: Carbamoyl phosphate synthase arginine-specific small chain (453 aa).

A mitochondrion-targeting transit peptide spans 1–33 (MFSRLAARLPKASALNGVAARQVRNLSQPAITG). The disordered stretch occupies residues 26 to 50 (LSQPAITGSKGRNMPAREPRTTAAA). Residues Ser-97, Gly-280, and Gly-282 each coordinate L-glutamine. Residues 233-420 (HVALIDCGVK…MENVELFKSN (188 aa)) enclose the Glutamine amidotransferase type-1 domain. Residue Cys-309 is the Nucleophile of the active site. Residues Leu-310, Gln-313, Asn-351, Gly-353, and Tyr-354 each coordinate L-glutamine. Active-site residues include His-393 and Glu-395.

This sequence belongs to the CarA family. Heterodimer composed of 2 chains; the small (or glutamine) chain promotes the hydrolysis of glutamine to ammonia, which is used by the large (or ammonia) chain to synthesize carbamoyl phosphate.

It localises to the mitochondrion matrix. The catalysed reaction is hydrogencarbonate + L-glutamine + 2 ATP + H2O = carbamoyl phosphate + L-glutamate + 2 ADP + phosphate + 2 H(+). The enzyme catalyses L-glutamine + H2O = L-glutamate + NH4(+). It functions in the pathway amino-acid biosynthesis; L-arginine biosynthesis; carbamoyl phosphate from bicarbonate: step 1/1. Small subunit of the arginine-specific carbamoyl phosphate synthase (CPSase). CPSase catalyzes the formation of carbamoyl phosphate from the ammonia moiety of glutamine, carbonate, and phosphate donated by ATP, the first step of the arginine biosynthetic pathway. The small subunit (glutamine amidotransferase) binds and cleaves glutamine to supply the large subunit with the substrate ammonia. The chain is Carbamoyl phosphate synthase arginine-specific small chain (arg-2) from Neurospora crassa (strain ATCC 24698 / 74-OR23-1A / CBS 708.71 / DSM 1257 / FGSC 987).